The following is a 199-amino-acid chain: Thymidylate kinase (199 aa).

7–14 provides a ligand contact to ATP; it reads GTEGVGKT.

It belongs to the thymidylate kinase family.

It carries out the reaction dTMP + ATP = dTDP + ADP. Functionally, phosphorylation of dTMP to form dTDP in both de novo and salvage pathways of dTTP synthesis. The sequence is that of Thymidylate kinase from Acinetobacter baumannii (strain ACICU).